Consider the following 1178-residue polypeptide: DNA-directed RNA polymerase subunit beta' (1178 aa).

Residues Cys60, Cys62, Cys75, and Cys78 each coordinate Zn(2+). The Mg(2+) site is built by Asp450, Asp452, and Asp454. Cys795, Cys869, Cys876, and Cys879 together coordinate Zn(2+).

This sequence belongs to the RNA polymerase beta' chain family. The RNAP catalytic core consists of 2 alpha, 1 beta, 1 beta' and 1 omega subunit. When a sigma factor is associated with the core the holoenzyme is formed, which can initiate transcription. Requires Mg(2+) as cofactor. It depends on Zn(2+) as a cofactor.

The enzyme catalyses RNA(n) + a ribonucleoside 5'-triphosphate = RNA(n+1) + diphosphate. In terms of biological role, DNA-dependent RNA polymerase catalyzes the transcription of DNA into RNA using the four ribonucleoside triphosphates as substrates. This is DNA-directed RNA polymerase subunit beta' from Clostridium botulinum (strain Langeland / NCTC 10281 / Type F).